The following is a 562-amino-acid chain: Beta-hexosaminidase (562 aa).

The first 22 residues, 1-22, serve as a signal peptide directing secretion; sequence MVLDKMIIFHLLLWLCNVVVHA. 7 N-linked (GlcNAc...) asparagine glycosylation sites follow: Asn-38, Asn-52, Asn-111, Asn-337, Asn-382, Asn-396, and Asn-463.

It belongs to the glycosyl hydrolase 20 family.

It carries out the reaction Hydrolysis of terminal non-reducing N-acetyl-D-hexosamine residues in N-acetyl-beta-D-hexosaminides.. Its function is as follows. Has a broad substrate specificity. In Candida albicans (Yeast), this protein is Beta-hexosaminidase (HEX1).